Here is a 91-residue protein sequence, read N- to C-terminus: Pre-early 3 receptor internalization and degradation alpha protein (91 aa).

At 1–4 (MIPR) the chain is on the cytoplasmic side. A propeptide spans 1–22 (MIPRVLILLTLVALFCACSTLA) (signal peptide). Residues 5-25 (VLILLTLVALFCACSTLAAVA) traverse the membrane as a helical segment. Over 26 to 34 (HIEVDCIPP) the chain is Lumenal. A helical transmembrane segment spans residues 35-60 (FTVYLLYGFVTLILICSLVTVVIAFI). Over 61-91 (QFIDWVCVRIAYLRHHPQYRDRTIADLLRIL) the chain is Cytoplasmic.

It belongs to the adenoviridae E3-RID-alpha family. As to quaternary structure, homodimer with only one chain cleaved by signal peptidase. Interacts with E3 RID-beta and E3 CR1-alpha. The signal peptide is only cleaved partially by host signal peptidase. This results in two forms of the protein, one uncleaved with two transmembrane regions, and one cleaved with one transmembrane region.

The protein resides in the host membrane. It is found in the host endoplasmic reticulum. Its function is as follows. Prevents infected cell apoptosis induced by the host immune system. Acts by down-regulating a number of cell surface receptors in the tumor necrosis factor (TNF) receptor superfamily, namely FAS, TNFRSF10A/TRAIL receptor 1, and TNFRSF10B/TRAIL receptor 2. Down-regulation of these death receptors protects adenovirus-infected cells from apoptosis induced by the death receptor ligands Fas ligand and TRAIL. RID complex also down-regulates certain tyrosine kinase cell surface receptors, especially the epidermal growth factor receptor (EGFR). RID-mediated Fas and EGFR down-regulation occurs via endocytosis of the receptors into endosomes followed by transport to and degradation within lysosomes. The protein is Pre-early 3 receptor internalization and degradation alpha protein of Homo sapiens (Human).